Reading from the N-terminus, the 603-residue chain is Elongation factor 4 (603 aa).

The tr-type G domain occupies 9–191; the sequence is SNIRNFSIIA…RIVRQIPPPK (183 aa). GTP-binding positions include 21 to 26 and 138 to 141; these read DHGKST and NKID.

The protein belongs to the TRAFAC class translation factor GTPase superfamily. Classic translation factor GTPase family. LepA subfamily.

Its subcellular location is the cell inner membrane. It carries out the reaction GTP + H2O = GDP + phosphate + H(+). Its function is as follows. Required for accurate and efficient protein synthesis under certain stress conditions. May act as a fidelity factor of the translation reaction, by catalyzing a one-codon backward translocation of tRNAs on improperly translocated ribosomes. Back-translocation proceeds from a post-translocation (POST) complex to a pre-translocation (PRE) complex, thus giving elongation factor G a second chance to translocate the tRNAs correctly. Binds to ribosomes in a GTP-dependent manner. This chain is Elongation factor 4, found in Idiomarina loihiensis (strain ATCC BAA-735 / DSM 15497 / L2-TR).